The following is a 296-amino-acid chain: Fructose-bisphosphate aldolase class 1 (296 aa).

Catalysis depends on E175, which acts as the Proton acceptor. K212 (schiff-base intermediate with dihydroxyacetone-P) is an active-site residue.

The protein belongs to the class I fructose-bisphosphate aldolase family.

It catalyses the reaction beta-D-fructose 1,6-bisphosphate = D-glyceraldehyde 3-phosphate + dihydroxyacetone phosphate. It participates in carbohydrate degradation; glycolysis; D-glyceraldehyde 3-phosphate and glycerone phosphate from D-glucose: step 4/4. The chain is Fructose-bisphosphate aldolase class 1 (fda) from Staphylococcus epidermidis (strain ATCC 12228 / FDA PCI 1200).